Consider the following 359-residue polypeptide: Dual-specificity RNA methyltransferase RlmN (359 aa).

Catalysis depends on E98, which acts as the Proton acceptor. A Radical SAM core domain is found at 104-329 (EPKRGTLCIS…LEHGLTATIR (226 aa)). C111 and C340 are oxidised to a cystine. C118, C122, and C125 together coordinate [4Fe-4S] cluster. Residues 166–167 (GE), S198, 220–222 (SLH), and N297 contribute to the S-adenosyl-L-methionine site. C340 (S-methylcysteine intermediate) is an active-site residue.

The protein belongs to the radical SAM superfamily. RlmN family. Requires [4Fe-4S] cluster as cofactor.

It localises to the cytoplasm. The enzyme catalyses adenosine(2503) in 23S rRNA + 2 reduced [2Fe-2S]-[ferredoxin] + 2 S-adenosyl-L-methionine = 2-methyladenosine(2503) in 23S rRNA + 5'-deoxyadenosine + L-methionine + 2 oxidized [2Fe-2S]-[ferredoxin] + S-adenosyl-L-homocysteine. It carries out the reaction adenosine(37) in tRNA + 2 reduced [2Fe-2S]-[ferredoxin] + 2 S-adenosyl-L-methionine = 2-methyladenosine(37) in tRNA + 5'-deoxyadenosine + L-methionine + 2 oxidized [2Fe-2S]-[ferredoxin] + S-adenosyl-L-homocysteine. Specifically methylates position 2 of adenine 2503 in 23S rRNA and position 2 of adenine 37 in tRNAs. m2A2503 modification seems to play a crucial role in the proofreading step occurring at the peptidyl transferase center and thus would serve to optimize ribosomal fidelity. This is Dual-specificity RNA methyltransferase RlmN from Halorhodospira halophila (strain DSM 244 / SL1) (Ectothiorhodospira halophila (strain DSM 244 / SL1)).